A 184-amino-acid polypeptide reads, in one-letter code: Fruit protein pKIWI501 (184 aa).

The tract at residues 1 to 184 (MATVEVTPAV…TEVPVDKTEE (184 aa)) is disordered. Low complexity-rich tracts occupy residues 25–36 (PQEPQPEAAVAA) and 53–65 (PEAV…PAAT). The segment covering 72–92 (EVAEAEEEVVEEPQEVPEEPV) has biased composition (acidic residues). Residues 96–119 (AAKEVEATEGKAEPTGEMKDKTPE) are compositionally biased toward basic and acidic residues. Residues 120–156 (ATDAPEAPAAAEEPTDAPEAPAVAEEPTNAPEAPAVG) show a composition bias toward low complexity. Residues 159–168 (PEAKEGKPDE) show a composition bias toward basic and acidic residues.

The protein to H.brasiliensis latex allergen Hev b 5.

The polypeptide is Fruit protein pKIWI501 (Actinidia deliciosa (Kiwi)).